The following is a 268-amino-acid chain: tRNA pseudouridine synthase A (268 aa).

D52 acts as the Nucleophile in catalysis. Y113 provides a ligand contact to substrate.

This sequence belongs to the tRNA pseudouridine synthase TruA family. In terms of assembly, homodimer.

The enzyme catalyses uridine(38/39/40) in tRNA = pseudouridine(38/39/40) in tRNA. Functionally, formation of pseudouridine at positions 38, 39 and 40 in the anticodon stem and loop of transfer RNAs. This Rhizobium leguminosarum bv. trifolii (strain WSM2304) protein is tRNA pseudouridine synthase A.